The primary structure comprises 376 residues: Actin, macronuclear (376 aa).

This sequence belongs to the actin family.

It localises to the cytoplasm. It is found in the cytoskeleton. It carries out the reaction ATP + H2O = ADP + phosphate + H(+). Actins are highly conserved proteins that are involved in various types of cell motility and are ubiquitously expressed in all eukaryotic cells. The sequence is that of Actin, macronuclear from Tetrahymena thermophila.